Here is a 561-residue protein sequence, read N- to C-terminus: DISARM protein DrmB (561 aa).

Its subcellular location is the cytoplasm. Component of antiviral defense system DISARM (defense island system associated with restriction-modification), composed of DrmE, DrmA, DrmB, DrmC and DrmMII. DISARM is probably a multi-gene restriction module, this subunit has an unknown function. Expression of DISARM in B.subtilis (strain BEST7003) confers resistance to phages Nf, phi29, phi105, phi3T, SPO1, SPR and SPP1. Protection is over 10(7)-fold against phi3T, 10(4)-10(5)-fold against Nf, phi29, phi105 and SPR, 100-fold against SPO1 and 10-fold against SPP1. DISARM does not interfere with phage adsorption, but instead interferes with (phi3T) DNA replication early in its cycle, preventing replication, circularization and lysogeny and probably causes phage DNA degradation (DNA is degraded in SPP1-infected cells). The polypeptide is DISARM protein DrmB (Bacillus paralicheniformis (strain ATCC 9945a / NCIMB 11709 / CD-2)).